Reading from the N-terminus, the 1026-residue chain is Exportin-T (1026 aa).

This sequence belongs to the exportin family.

The protein localises to the nucleus. It is found in the cytoplasm. TRNA nucleus export receptor which facilitates tRNA translocation across the nuclear pore complex. Involved in pre-tRNA splicing, probably by affecting the interaction of pre-tRNA with splicing endonuclease. The sequence is that of Exportin-T (los1) from Aspergillus oryzae (strain ATCC 42149 / RIB 40) (Yellow koji mold).